Here is a 606-residue protein sequence, read N- to C-terminus: KH domain-containing protein At4g18375 (606 aa).

Positions 1–10 (MVERKKRKQI) are enriched in basic residues. The segment at 1-26 (MVERKKRKQIQRNNSESNRNQKRRIS) is disordered. 5 KH domains span residues 35-99 (LVVY…IGFT), 138-210 (NKEC…LFAV), 311-380 (ELVF…VEAV), 394-455 (NVKM…LIQI), and 535-599 (SSAL…ENLV).

It localises to the nucleus. The protein is KH domain-containing protein At4g18375 of Arabidopsis thaliana (Mouse-ear cress).